The primary structure comprises 256 residues: 5'-nucleotidase SurE (256 aa).

Residues D8, D9, S40, and N92 each contribute to the a divalent metal cation site.

Belongs to the SurE nucleotidase family. It depends on a divalent metal cation as a cofactor.

It is found in the cytoplasm. It catalyses the reaction a ribonucleoside 5'-phosphate + H2O = a ribonucleoside + phosphate. In terms of biological role, nucleotidase that shows phosphatase activity on nucleoside 5'-monophosphates. In Sinorhizobium medicae (strain WSM419) (Ensifer medicae), this protein is 5'-nucleotidase SurE.